Reading from the N-terminus, the 132-residue chain is MVLLEKLWDDVVAGPQPDRGLGRLRKITTQPINIRDIGEGSSSKVVMHRSLTMPAAVSPGTPTTPTTPTTPRKDNVWRSVFNPGSNLATRAIGSNIFDKPTHPNSPSVYDCVDNEAQRKEHVALCLVGAWIK.

The interval 53 to 76 (MPAAVSPGTPTTPTTPTTPRKDNV) is disordered. Residues 61–70 (TPTTPTTPTT) are compositionally biased toward low complexity. T64 is modified (phosphothreonine).

This sequence belongs to the DRM1/ARP family. As to expression, isoform 1: Expressed mainly in the low bolt. Isoform 2: Expressed mainly in the low bolt. Detected in flowers. Isoform 4: Expressed mainly in the low bolt. Isoform 5: Expressed mainly in the 6 days old seedlings. Detected in 16 days old seedlings, axil, low bolt and floral samples, but only barely in leaves and top bolt.

The polypeptide is Dormancy-associated protein 1 (Arabidopsis thaliana (Mouse-ear cress)).